The primary structure comprises 230 residues: Phosphoribosylaminoimidazole-succinocarboxamide synthase (230 aa).

It belongs to the SAICAR synthetase family.

It catalyses the reaction 5-amino-1-(5-phospho-D-ribosyl)imidazole-4-carboxylate + L-aspartate + ATP = (2S)-2-[5-amino-1-(5-phospho-beta-D-ribosyl)imidazole-4-carboxamido]succinate + ADP + phosphate + 2 H(+). It functions in the pathway purine metabolism; IMP biosynthesis via de novo pathway; 5-amino-1-(5-phospho-D-ribosyl)imidazole-4-carboxamide from 5-amino-1-(5-phospho-D-ribosyl)imidazole-4-carboxylate: step 1/2. This Thermotoga petrophila (strain ATCC BAA-488 / DSM 13995 / JCM 10881 / RKU-1) protein is Phosphoribosylaminoimidazole-succinocarboxamide synthase.